A 347-amino-acid polypeptide reads, in one-letter code: Phenylalanine--tRNA ligase alpha subunit (347 aa).

Position 261 (E261) interacts with Mg(2+).

This sequence belongs to the class-II aminoacyl-tRNA synthetase family. Phe-tRNA synthetase alpha subunit type 1 subfamily. As to quaternary structure, tetramer of two alpha and two beta subunits. Requires Mg(2+) as cofactor.

Its subcellular location is the cytoplasm. It carries out the reaction tRNA(Phe) + L-phenylalanine + ATP = L-phenylalanyl-tRNA(Phe) + AMP + diphosphate + H(+). This Streptococcus mutans serotype c (strain ATCC 700610 / UA159) protein is Phenylalanine--tRNA ligase alpha subunit.